The following is a 513-amino-acid chain: Maturase K (513 aa).

This sequence belongs to the intron maturase 2 family. MatK subfamily.

It localises to the plastid. Its subcellular location is the chloroplast. In terms of biological role, usually encoded in the trnK tRNA gene intron. Probably assists in splicing its own and other chloroplast group II introns. The chain is Maturase K from Saccharum officinarum (Sugarcane).